The sequence spans 200 residues: 3-isopropylmalate dehydratase small subunit (200 aa).

This sequence belongs to the LeuD family. LeuD type 1 subfamily. As to quaternary structure, heterodimer of LeuC and LeuD.

The enzyme catalyses (2R,3S)-3-isopropylmalate = (2S)-2-isopropylmalate. It functions in the pathway amino-acid biosynthesis; L-leucine biosynthesis; L-leucine from 3-methyl-2-oxobutanoate: step 2/4. Catalyzes the isomerization between 2-isopropylmalate and 3-isopropylmalate, via the formation of 2-isopropylmaleate. The sequence is that of 3-isopropylmalate dehydratase small subunit from Histophilus somni (strain 129Pt) (Haemophilus somnus).